A 185-amino-acid polypeptide reads, in one-letter code: Elongation factor P (185 aa).

This sequence belongs to the elongation factor P family.

Its subcellular location is the cytoplasm. The protein operates within protein biosynthesis; polypeptide chain elongation. In terms of biological role, involved in peptide bond synthesis. Stimulates efficient translation and peptide-bond synthesis on native or reconstituted 70S ribosomes in vitro. Probably functions indirectly by altering the affinity of the ribosome for aminoacyl-tRNA, thus increasing their reactivity as acceptors for peptidyl transferase. This is Elongation factor P from Bordetella petrii (strain ATCC BAA-461 / DSM 12804 / CCUG 43448).